The sequence spans 312 residues: Lichenase-2 (312 aa).

The signal sequence occupies residues 1 to 6 (PPSVES). Catalysis depends on Glu99, which acts as the Proton donor. The N-linked (GlcNAc...) asparagine glycan is linked to Asn196. Glu238 functions as the Nucleophile in the catalytic mechanism.

It belongs to the glycosyl hydrolase 17 family.

It carries out the reaction Hydrolysis of (1-&gt;4)-beta-D-glucosidic linkages in beta-D-glucans containing (1-&gt;3)- and (1-&gt;4)-bonds.. The protein operates within glycan metabolism; beta-D-glucan degradation. Functions in plant cell wall hydrolysis during mobilization of the endosperm in germinating grain or during the growth of vegetative tissues. The polypeptide is Lichenase-2 (Hordeum vulgare (Barley)).